Reading from the N-terminus, the 318-residue chain is NADH-ubiquinone oxidoreductase chain 1 (318 aa).

The next 8 helical transmembrane spans lie at 3–23 (FVNL…LTLL), 68–88 (LILF…MWIP), 102–122 (ILFM…SGWA), 146–166 (LAII…STLI), 171–191 (HIWL…STLA), 222–242 (LFFL…TILF), 253–273 (EMYT…FLWI), and 294–314 (LPLT…LASI).

The protein belongs to the complex I subunit 1 family.

It localises to the mitochondrion inner membrane. It carries out the reaction a ubiquinone + NADH + 5 H(+)(in) = a ubiquinol + NAD(+) + 4 H(+)(out). Core subunit of the mitochondrial membrane respiratory chain NADH dehydrogenase (Complex I) that is believed to belong to the minimal assembly required for catalysis. Complex I functions in the transfer of electrons from NADH to the respiratory chain. The immediate electron acceptor for the enzyme is believed to be ubiquinone. This is NADH-ubiquinone oxidoreductase chain 1 (MT-ND1) from Nyctalus plancyi velutinus (Fine-haired noctule).